A 605-amino-acid polypeptide reads, in one-letter code: Conglutin beta 7 (605 aa).

The signal sequence occupies residues 1-30; it reads MARMRVRFPTLVLLLGILFLMAVSIGIAYG. The span at 37–105 shows a compositional bias: basic and acidic residues; the sequence is NHERPGEREH…REPCREREQE (69 aa). 3 disordered regions span residues 37 to 193, 346 to 367, and 382 to 405; these read NHER…RFQT, LGNEDEQEDEEQRRGQEQSYQD, and LRKHAQSSSRKGKPSESGPFNLRS. Residues 140–149 are compositionally biased toward low complexity; that stretch reads QGSSSSSRKQ. A compositionally biased stretch (basic and acidic residues) spans 150–179; sequence SGYERRQYHERREQRDEKEKEQDSRSDSRR. Positions 184-342 constitute a Cupin type-1 1 domain; the sequence is YHFSSERFQT…TFNTRYEEIQ (159 aa). Residues 401–563 enclose the Cupin type-1 2 domain; that stretch reads FNLRSNESIY…TFPGSAQDVE (163 aa). Asparagine 406 and asparagine 513 each carry an N-linked (GlcNAc...) asparagine glycan. Residues 574-593 are disordered; it reads FANAQPQQKQQREKEGRRGR.

This sequence belongs to the 7S seed storage protein family. In terms of assembly, component of globulins complexes which accumulate in seeds.

Seed storage protein. Accumulates during seed development and is hydrolyzed after germination to provide a carbon and nitrogen source for the developing seedling. This chain is Conglutin beta 7, found in Lupinus angustifolius (Narrow-leaved blue lupine).